The following is a 569-amino-acid chain: DNA-binding protein eta2 (569 aa).

Disordered regions lie at residues Met-1 to Cys-26 and Lys-133 to Arg-159. The span at Ile-9 to Cys-26 shows a compositional bias: polar residues. Position 21 is a phosphoserine (Ser-21). Myb-like domains follow at residues Leu-322–Val-371 and Glu-377–Ile-459. Residues Ile-459–Lys-487 form a disordered region. Over residues Lys-474 to Lys-487 the composition is skewed to basic residues.

The protein localises to the nucleus. The sequence is that of DNA-binding protein eta2 (eta2) from Schizosaccharomyces pombe (strain 972 / ATCC 24843) (Fission yeast).